The sequence spans 204 residues: Phospholipase D (204 aa).

The signal sequence occupies residues 1–22 (MKSKNNKFIAMSIPFILGTALG). Residues 142–169 (VPGIAHNKVIIIDKKKVITGSFNFTVAA) enclose the PLD phosphodiesterase domain. Residues His-147, Lys-149, and Asp-154 contribute to the active site.

This sequence belongs to the phospholipase D family. Homodimer.

Its subcellular location is the secreted. The enzyme catalyses a 1,2-diacyl-sn-glycero-3-phosphocholine + H2O = a 1,2-diacyl-sn-glycero-3-phosphate + choline + H(+). Functionally, could be a virulence factor. The protein is Phospholipase D (pld) of Rickettsia typhi (strain ATCC VR-144 / Wilmington).